The chain runs to 295 residues: MTNMKNKFGNKLIGAHVSAAGGVDQAPLRAREIGANAFALFTKNQRQWVAKPLEAKTISAFKANCKMLGFGAEHILPHDSYLINLGAPEAEKLDKSRAAFIDEMERCNQLGLTLLNFHPGSHLKKVSEQECLATIAESINLAHKTVPDVVAVIENTAGQGTNLGWKFEHLAEIIEQVEDKDRVGVCIDTCHTFTAGYDLRTKEDCERTFAEFDRIVGMHYLRAMHLNDSKVEFASKVDRHHSLGKGEIGWDCFEYIAKDSRFDGIPLILETIDPDIWQQEINTLRQFHLAAINNQ.

Residues His-78, His-118, Glu-154, Asp-188, His-191, His-225, Asp-238, His-240, and Glu-270 each contribute to the Zn(2+) site.

The protein belongs to the AP endonuclease 2 family. Requires Zn(2+) as cofactor.

The catalysed reaction is Endonucleolytic cleavage to 5'-phosphooligonucleotide end-products.. In terms of biological role, endonuclease IV plays a role in DNA repair. It cleaves phosphodiester bonds at apurinic or apyrimidinic (AP) sites, generating a 3'-hydroxyl group and a 5'-terminal sugar phosphate. The sequence is that of Probable endonuclease 4 from Vibrio parahaemolyticus serotype O3:K6 (strain RIMD 2210633).